The sequence spans 132 residues: Small ribosomal subunit protein uS8c (132 aa).

It belongs to the universal ribosomal protein uS8 family. As to quaternary structure, part of the 30S ribosomal subunit.

It is found in the plastid. The protein localises to the chloroplast. In terms of biological role, one of the primary rRNA binding proteins, it binds directly to 16S rRNA central domain where it helps coordinate assembly of the platform of the 30S subunit. The polypeptide is Small ribosomal subunit protein uS8c (rps8) (Ceratophyllum demersum (Rigid hornwort)).